Consider the following 602-residue polypeptide: Elongation factor 4 (602 aa).

Residues 7–189 (SRIRNFCIIA…AVVDRVPAPA (183 aa)) enclose the tr-type G domain. GTP is bound by residues 19 to 24 (DHGKST) and 136 to 139 (NKID).

Belongs to the TRAFAC class translation factor GTPase superfamily. Classic translation factor GTPase family. LepA subfamily.

It is found in the cell inner membrane. It catalyses the reaction GTP + H2O = GDP + phosphate + H(+). Functionally, required for accurate and efficient protein synthesis under certain stress conditions. May act as a fidelity factor of the translation reaction, by catalyzing a one-codon backward translocation of tRNAs on improperly translocated ribosomes. Back-translocation proceeds from a post-translocation (POST) complex to a pre-translocation (PRE) complex, thus giving elongation factor G a second chance to translocate the tRNAs correctly. Binds to ribosomes in a GTP-dependent manner. The polypeptide is Elongation factor 4 (Synechococcus sp. (strain CC9902)).